The sequence spans 279 residues: Undecaprenyl-diphosphatase (279 aa).

8 consecutive transmembrane segments (helical) span residues 2-22 (LFIELLKAIFFGVIEGVTEWL), 44-64 (AFMEMFNIVIQLGAIIAVIVI), 85-105 (WQLWLKVAIACIPSIIIAVPL), 113-133 (FNHMLPIAIALIVYGVAFLWI), 163-183 (VLSIIPGTSRSGATILGAIIL), 188-208 (TVAADFTFFLAIPTMFGYSGL), 225-245 (LLVLLVASLTAFAVSLYVIKL), and 255-275 (FTVFGRYRIVLGSLLIVYSVF).

This sequence belongs to the UppP family.

It localises to the cell membrane. The enzyme catalyses di-trans,octa-cis-undecaprenyl diphosphate + H2O = di-trans,octa-cis-undecaprenyl phosphate + phosphate + H(+). Functionally, catalyzes the dephosphorylation of undecaprenyl diphosphate (UPP). Confers resistance to bacitracin. The protein is Undecaprenyl-diphosphatase of Streptococcus equi subsp. zooepidemicus (strain H70).